Here is a 91-residue protein sequence, read N- to C-terminus: DNA/RNA-binding protein Alba (91 aa).

It belongs to the histone-like Alba family.

Its subcellular location is the cytoplasm. The protein resides in the chromosome. In terms of biological role, binds double-stranded DNA tightly but without sequence specificity. Involved in DNA compaction. This is DNA/RNA-binding protein Alba from Methanoculleus marisnigri (strain ATCC 35101 / DSM 1498 / JR1).